We begin with the raw amino-acid sequence, 100 residues long: Small ribosomal subunit protein uS14c (100 aa).

It belongs to the universal ribosomal protein uS14 family. As to quaternary structure, part of the 30S ribosomal subunit.

The protein localises to the plastid. It localises to the chloroplast. In terms of biological role, binds 16S rRNA, required for the assembly of 30S particles. The chain is Small ribosomal subunit protein uS14c from Emiliania huxleyi (Coccolithophore).